A 351-amino-acid chain; its full sequence is uncharacterized protein (351 aa).

Positions 1 to 32 (MKNKKRVFIASSLSCVLLLLSAANTEANSANK) are cleaved as a signal peptide. Positions 26 to 74 (EANSANKDSQDQTKKEHVDKAQQKEKRNVNDKDKNTPGPDDIGKNGKVT) are disordered. The span at 33–60 (DSQDQTKKEHVDKAQQKEKRNVNDKDKN) shows a compositional bias: basic and acidic residues.

It belongs to the aerolysin family.

This is an uncharacterized protein from Staphylococcus aureus (strain MRSA252).